We begin with the raw amino-acid sequence, 277 residues long: Alpha carbonic anhydrase 5 (277 aa).

The first 22 residues, 1–22 (MKIPSIGYVFFLIFISITIVSS), serve as a signal peptide directing secretion. The 237-residue stretch at 33–269 (TQFNYEKKGE…KNERPVALYI (237 aa)) folds into the Alpha-carbonic anhydrase domain. C58 and C219 form a disulfide bridge. N91 carries N-linked (GlcNAc...) asparagine glycosylation. Catalysis depends on H99, which acts as the Proton acceptor. N-linked (GlcNAc...) asparagine glycosylation is present at N117. Positions 127, 129, and 146 each coordinate Zn(2+). 215–216 (TT) contacts substrate.

This sequence belongs to the alpha-class carbonic anhydrase family. Zn(2+) is required as a cofactor. Post-translationally, N-glycosylated.

The protein localises to the plastid. It is found in the chloroplast stroma. It catalyses the reaction hydrogencarbonate + H(+) = CO2 + H2O. Functionally, reversible hydration of carbon dioxide. This Arabidopsis thaliana (Mouse-ear cress) protein is Alpha carbonic anhydrase 5 (ACA5).